A 353-amino-acid chain; its full sequence is Mitochondrial distribution and morphology protein 10 (353 aa).

It belongs to the MDM10 family. Component of the ER-mitochondria encounter structure (ERMES) or MDM complex, composed of MMM1, MDM10, MDM12 and MDM34. Associates with the mitochondrial outer membrane sorting assembly machinery SAM(core) complex.

It is found in the mitochondrion outer membrane. In terms of biological role, component of the ERMES/MDM complex, which serves as a molecular tether to connect the endoplasmic reticulum and mitochondria. Components of this complex are involved in the control of mitochondrial shape and protein biogenesis and may function in phospholipid exchange. MDM10 is involved in the late assembly steps of the general translocase of the mitochondrial outer membrane (TOM complex). Functions in the TOM40-specific route of the assembly of outer membrane beta-barrel proteins, including the association of TOM40 with the receptor TOM22 and small TOM proteins. Can associate with the SAM(core) complex as well as the MDM12-MMM1 complex, both involved in late steps of the major beta-barrel assembly pathway, that is responsible for biogenesis of all outer membrane beta-barrel proteins. May act as a switch that shuttles between both complexes and channels precursor proteins into the TOM40-specific pathway. Plays a role in mitochondrial morphology and in the inheritance of mitochondria. The sequence is that of Mitochondrial distribution and morphology protein 10 from Yarrowia lipolytica (strain CLIB 122 / E 150) (Yeast).